Here is a 341-residue protein sequence, read N- to C-terminus: S-adenosylmethionine:tRNA ribosyltransferase-isomerase (341 aa).

It belongs to the QueA family. As to quaternary structure, monomer.

The protein localises to the cytoplasm. It catalyses the reaction 7-aminomethyl-7-carbaguanosine(34) in tRNA + S-adenosyl-L-methionine = epoxyqueuosine(34) in tRNA + adenine + L-methionine + 2 H(+). Its pathway is tRNA modification; tRNA-queuosine biosynthesis. In terms of biological role, transfers and isomerizes the ribose moiety from AdoMet to the 7-aminomethyl group of 7-deazaguanine (preQ1-tRNA) to give epoxyqueuosine (oQ-tRNA). This Staphylococcus aureus (strain Mu3 / ATCC 700698) protein is S-adenosylmethionine:tRNA ribosyltransferase-isomerase.